Here is a 364-residue protein sequence, read N- to C-terminus: Chorismate synthase (364 aa).

2 residues coordinate NADP(+): Arg48 and Arg54. Residues 129 to 131 (RSS), 243 to 244 (NA), Gly288, 303 to 307 (KPTSS), and Arg329 each bind FMN.

This sequence belongs to the chorismate synthase family. As to quaternary structure, homotetramer. Requires FMNH2 as cofactor.

It catalyses the reaction 5-O-(1-carboxyvinyl)-3-phosphoshikimate = chorismate + phosphate. Its pathway is metabolic intermediate biosynthesis; chorismate biosynthesis; chorismate from D-erythrose 4-phosphate and phosphoenolpyruvate: step 7/7. Its function is as follows. Catalyzes the anti-1,4-elimination of the C-3 phosphate and the C-6 proR hydrogen from 5-enolpyruvylshikimate-3-phosphate (EPSP) to yield chorismate, which is the branch point compound that serves as the starting substrate for the three terminal pathways of aromatic amino acid biosynthesis. This reaction introduces a second double bond into the aromatic ring system. The polypeptide is Chorismate synthase (Chelativorans sp. (strain BNC1)).